The primary structure comprises 231 residues: Putative transglycosylase H16_A0665 (231 aa).

Residues 8–28 (FIKLLVLAVIGGALLAAIAIL) traverse the membrane as a helical segment.

Belongs to the glycosyltransferase 51 family.

The protein localises to the secreted. The protein resides in the membrane. Its pathway is cell wall biogenesis; peptidoglycan biosynthesis. In terms of biological role, cell wall formation. The sequence is that of Putative transglycosylase H16_A0665 from Cupriavidus necator (strain ATCC 17699 / DSM 428 / KCTC 22496 / NCIMB 10442 / H16 / Stanier 337) (Ralstonia eutropha).